The sequence spans 319 residues: 7,8-didemethyl-8-hydroxy-5-deazariboflavin synthase (319 aa).

The Radical SAM core domain occupies 5-236 (VTYSPAYTIV…SNITLQIPPN (232 aa)). Residues Cys19, Cys23, and Cys26 each contribute to the [4Fe-4S] cluster site.

This sequence belongs to the radical SAM superfamily. CofG family. In terms of assembly, consists of two subunits, CofG and CofH. Requires [4Fe-4S] cluster as cofactor.

It carries out the reaction 5-amino-5-(4-hydroxybenzyl)-6-(D-ribitylimino)-5,6-dihydrouracil + S-adenosyl-L-methionine = 7,8-didemethyl-8-hydroxy-5-deazariboflavin + 5'-deoxyadenosine + L-methionine + NH4(+) + H(+). It participates in cofactor biosynthesis; coenzyme F0 biosynthesis. Functionally, catalyzes the radical-mediated synthesis of 7,8-didemethyl-8-hydroxy-5-deazariboflavin from 5-amino-5-(4-hydroxybenzyl)-6-(D-ribitylimino)-5,6-dihydrouracil. In Trichodesmium erythraeum (strain IMS101), this protein is 7,8-didemethyl-8-hydroxy-5-deazariboflavin synthase.